The following is a 449-amino-acid chain: Putative F-box/FBD/LRR-repeat protein At3g49480 (449 aa).

An F-box domain is found at Glu11–Thr59. 6 LRR repeats span residues Thr60 to Leu91, Arg153 to Cys180, Val182 to Arg206, Phe235 to Asp260, Val275 to Pro302, and Ser327 to Ser352. In terms of domain architecture, FBD spans Trp364–Ser412.

In Arabidopsis thaliana (Mouse-ear cress), this protein is Putative F-box/FBD/LRR-repeat protein At3g49480.